A 508-amino-acid polypeptide reads, in one-letter code: Light-independent protochlorophyllide reductase subunit B (508 aa).

[4Fe-4S] cluster is bound at residue Asp-36. Catalysis depends on Asp-294, which acts as the Proton donor. 429–430 (GM) is a substrate binding site.

Belongs to the ChlB/BchB/BchZ family. Protochlorophyllide reductase is composed of three subunits; ChlL, ChlN and ChlB. Forms a heterotetramer of two ChlB and two ChlN subunits. The cofactor is [4Fe-4S] cluster.

It carries out the reaction chlorophyllide a + oxidized 2[4Fe-4S]-[ferredoxin] + 2 ADP + 2 phosphate = protochlorophyllide a + reduced 2[4Fe-4S]-[ferredoxin] + 2 ATP + 2 H2O. It functions in the pathway porphyrin-containing compound metabolism; chlorophyll biosynthesis (light-independent). Functionally, component of the dark-operative protochlorophyllide reductase (DPOR) that uses Mg-ATP and reduced ferredoxin to reduce ring D of protochlorophyllide (Pchlide) to form chlorophyllide a (Chlide). This reaction is light-independent. The NB-protein (ChlN-ChlB) is the catalytic component of the complex. The chain is Light-independent protochlorophyllide reductase subunit B from Synechocystis sp. (strain ATCC 27184 / PCC 6803 / Kazusa).